Here is a 355-residue protein sequence, read N- to C-terminus: Putative L-lysine 2,3-aminomutase (355 aa).

The Radical SAM core domain maps to 93–308 (VHQYANRVLM…KERLSGLSLP (216 aa)). Residues Cys108, Cys112, and Cys115 each coordinate [4Fe-4S] cluster. An N6-(pyridoxal phosphate)lysine modification is found at Lys320.

The protein belongs to the radical SAM superfamily. KamA family. [4Fe-4S] cluster is required as a cofactor. The cofactor is pyridoxal 5'-phosphate.

This chain is Putative L-lysine 2,3-aminomutase, found in Treponema pallidum (strain Nichols).